Reading from the N-terminus, the 117-residue chain is Ribonuclease P protein component 4 (117 aa).

Zn(2+) contacts are provided by Cys-63, Cys-66, Cys-92, and Cys-95.

Belongs to the eukaryotic/archaeal RNase P protein component 4 family. As to quaternary structure, consists of a catalytic RNA component and at least 4 protein subunits. Forms a subcomplex with Rnp1 which stimulates the catalytic RNA. The cofactor is Zn(2+).

Its subcellular location is the cytoplasm. It catalyses the reaction Endonucleolytic cleavage of RNA, removing 5'-extranucleotides from tRNA precursor.. In terms of biological role, part of ribonuclease P, a protein complex that generates mature tRNA molecules by cleaving their 5'-ends. The RNA is catalytic, but its KM for pre-tRNA is 170-fold decreased in the presence of the 4 known protein subunits (Rnp1-4). The protein subunits also decrease the amount of Mg(2+) needed for activity. This Pyrococcus furiosus (strain ATCC 43587 / DSM 3638 / JCM 8422 / Vc1) protein is Ribonuclease P protein component 4.